A 495-amino-acid polypeptide reads, in one-letter code: GTPase Der (495 aa).

2 EngA-type G domains span residues 3–166 (PVVA…VQDE) and 208–381 (IKLA…SCAT). GTP-binding positions include 9 to 16 (GRPNVGKS), 56 to 60 (DTGGI), 118 to 121 (NKTD), 214 to 221 (GRPNVGKS), 261 to 265 (DTAGV), and 326 to 329 (NKWD). One can recognise a KH-like domain in the interval 382 to 466 (RRVSTAMLTR…PIRIQFKEGE (85 aa)).

The protein belongs to the TRAFAC class TrmE-Era-EngA-EngB-Septin-like GTPase superfamily. EngA (Der) GTPase family. Associates with the 50S ribosomal subunit.

GTPase that plays an essential role in the late steps of ribosome biogenesis. The polypeptide is GTPase Der (Pectobacterium atrosepticum (strain SCRI 1043 / ATCC BAA-672) (Erwinia carotovora subsp. atroseptica)).